The following is a 501-amino-acid chain: Lysine--tRNA ligase (501 aa).

Residues glutamate 411 and glutamate 418 each contribute to the Mg(2+) site.

The protein belongs to the class-II aminoacyl-tRNA synthetase family. As to quaternary structure, homodimer. Mg(2+) is required as a cofactor.

The protein resides in the cytoplasm. The enzyme catalyses tRNA(Lys) + L-lysine + ATP = L-lysyl-tRNA(Lys) + AMP + diphosphate. In Thiobacillus denitrificans (strain ATCC 25259 / T1), this protein is Lysine--tRNA ligase.